The chain runs to 317 residues: Putative pyridoxal kinase BUD17 (317 aa).

Ser16 and Tyr128 together coordinate substrate. Residues 190 to 191 (TS) and 220 to 232 (EIPK…SGSG) each bind ATP. Asp233 contacts substrate.

The protein belongs to the pyridoxine kinase family. The cofactor is a divalent metal cation.

It localises to the cytoplasm. The protein resides in the nucleus. The enzyme catalyses pyridoxal + ATP = pyridoxal 5'-phosphate + ADP + H(+). In terms of biological role, required for synthesis of pyridoxal-5-phosphate from vitamin B6. Important for bud site selection. This is Putative pyridoxal kinase BUD17 (BUD17) from Saccharomyces cerevisiae (strain ATCC 204508 / S288c) (Baker's yeast).